We begin with the raw amino-acid sequence, 178 residues long: Gamma-crystallin S (178 aa).

Residue serine 2 is modified to N-acetylserine. Residues 2-5 (SKTG) form an N-terminal arm region. Beta/gamma crystallin 'Greek key' domains follow at residues 6-44 (TKIT…KVEG) and 45-87 (GTWA…RAVH). The connecting peptide stretch occupies residues 88 to 93 (LPSGGQ). Beta/gamma crystallin 'Greek key' domains lie at 94 to 134 (YKIQ…KVLE) and 135 to 177 (GVWI…RRIV).

This sequence belongs to the beta/gamma-crystallin family. Monomer.

Its function is as follows. Crystallins are the dominant structural components of the vertebrate eye lens. The polypeptide is Gamma-crystallin S (CRYGS) (Homo sapiens (Human)).